Here is a 915-residue protein sequence, read N- to C-terminus: Protein ZDS1 (915 aa).

Disordered regions lie at residues 1–28 (MSNR…KRKS), 69–134 (GESS…KKGV), 179–261 (LSDN…SETV), 310–330 (GSYS…EGDI), 412–433 (KSPF…SIGD), and 464–807 (KVRN…SILP). Positions 74 to 93 (RRSWSGTTSSSASMPSDTTT) are enriched in low complexity. Polar residues predominate over residues 115 to 125 (GIESSNKTKQG). A compositionally biased stretch (basic and acidic residues) spans 202-212 (DKESQSYENKE). Ser229 is subject to Phosphoserine. Positions 243–252 (EFDDNEDDDN) are enriched in acidic residues. The segment covering 313–327 (SDKKDQPQPEGHYDE) has biased composition (basic and acidic residues). Positions 464–480 (KVRNDTVEQDLELREGT) are enriched in basic and acidic residues. Positions 515-530 (DDNEENQGDDENEENV) are enriched in acidic residues. Composition is skewed to basic and acidic residues over residues 531 to 541 (DSQRMELDNSK) and 552 to 562 (EKTEVSNKEEM). 2 stretches are compositionally biased toward low complexity: residues 565-574 (SSTSTATSQT) and 597-609 (SSSP…SSPS). Composition is skewed to basic residues over residues 618 to 627 (VRVRKSKKLG) and 642 to 656 (NRPR…RHGS). Positions 668–679 (QPQQQIPLQPQL) are enriched in low complexity. Residues 696–710 (LPQLQPAVSVSSTKS) are compositionally biased toward polar residues. Basic and acidic residues-rich tracts occupy residues 711–721 (NSRDREEEEAK) and 742–751 (VQKENTDEQK). The segment covering 752 to 793 (AQLQAPAQEQVQTSVPVQASAPVQNSAPVQTSAPVEASAQTQ) has biased composition (polar residues).

The protein to yeast ZDS2/MCS1. Interacts with BCY1, DBP5, GFD1 and SKG6.

The protein resides in the cytoplasm. Has a role in establishing cell polarity. Together with cAMP-dependent protein kinase regulatory subunit BCY1, provides a negative feedback control on the cell wall integrity-signaling pathway by acting as a negative regulator of MAP kinase SLT2/MPK1. In heat-stressed cells appears to play a role in localizing BCY1 to the cytoplasm. Seems to interact with, and down-regulate, CDC42. Also acts as a suppressor of PKC1. May act as an integration point for distinct signaling pathways helping to maintain a balance among these different pathways. Its function is as follows. When associated with DBP5, GFD1 and nucleoporins at the cytosolic fibrils of the nuclear pore complex, is required for mRNA export form the nucleus. The chain is Protein ZDS1 (ZDS1) from Saccharomyces cerevisiae (strain ATCC 204508 / S288c) (Baker's yeast).